Reading from the N-terminus, the 231-residue chain is DNA mismatch repair protein MutH (231 aa).

Belongs to the MutH family.

Its subcellular location is the cytoplasm. Sequence-specific endonuclease that cleaves unmethylated GATC sequences. It is involved in DNA mismatch repair. This is DNA mismatch repair protein MutH from Salmonella typhi.